Consider the following 191-residue polypeptide: FMN reductase (NADPH) (191 aa).

This sequence belongs to the SsuE family. Homodimer.

It catalyses the reaction FMNH2 + NADP(+) = FMN + NADPH + 2 H(+). Its function is as follows. Catalyzes an NADPH-dependent reduction of FMN, but is also able to reduce FAD or riboflavin. In Escherichia coli (strain K12), this protein is FMN reductase (NADPH) (ssuE).